Consider the following 436-residue polypeptide: 3-ketoacyl-CoA thiolase (436 aa).

The active-site Acyl-thioester intermediate is C99. Catalysis depends on proton acceptor residues H392 and C422.

The protein belongs to the thiolase-like superfamily. Thiolase family. In terms of assembly, heterotetramer of two alpha chains (FadJ) and two beta chains (FadI).

Its subcellular location is the cytoplasm. It carries out the reaction an acyl-CoA + acetyl-CoA = a 3-oxoacyl-CoA + CoA. The protein operates within lipid metabolism; fatty acid beta-oxidation. Functionally, catalyzes the final step of fatty acid oxidation in which acetyl-CoA is released and the CoA ester of a fatty acid two carbons shorter is formed. This Escherichia coli O8 (strain IAI1) protein is 3-ketoacyl-CoA thiolase.